Reading from the N-terminus, the 361-residue chain is Molybdenum import ATP-binding protein ModC (361 aa).

The ABC transporter domain maps to 1 to 235 (MDGLRLRFRR…VDLPLALDDD (235 aa)). 33–40 (GHSGSGKS) serves as a coordination point for ATP. The Mop domain maps to 296-361 (QSSILNRLPV…AQIKSVAVLA (66 aa)).

Belongs to the ABC transporter superfamily. Molybdate importer (TC 3.A.1.8) family. In terms of assembly, the complex is composed of two ATP-binding proteins (ModC), two transmembrane proteins (ModB) and a solute-binding protein (ModA).

The protein resides in the cell inner membrane. The catalysed reaction is molybdate(out) + ATP + H2O = molybdate(in) + ADP + phosphate + H(+). Functionally, part of the ABC transporter complex ModABC involved in molybdenum import. Responsible for energy coupling to the transport system. The polypeptide is Molybdenum import ATP-binding protein ModC (Pseudomonas aeruginosa (strain ATCC 15692 / DSM 22644 / CIP 104116 / JCM 14847 / LMG 12228 / 1C / PRS 101 / PAO1)).